A 273-amino-acid chain; its full sequence is Undecaprenyl-diphosphatase (273 aa).

Helical transmembrane passes span 3–23 (IVEIIKAIILGMVEGLTEFAP), 48–68 (AANTFKVVIQLGSILAVVVVF), 92–112 (MQVIVGLIPAGVLGVLFEDYI), 116–136 (LFSTATVLIGLVLGALLMIAA), 152–172 (ITYKQALIVGLVQCLSLWPGF), 193–213 (ADFTFIMAVPIMMGASVLSLL), 220–240 (TIDALPFFTAGFISAFLFALI), and 252–272 (IRLVPFAVYRIVLALVIYIVY).

Belongs to the UppP family.

The protein localises to the cell membrane. It catalyses the reaction di-trans,octa-cis-undecaprenyl diphosphate + H2O = di-trans,octa-cis-undecaprenyl phosphate + phosphate + H(+). Catalyzes the dephosphorylation of undecaprenyl diphosphate (UPP). Confers resistance to bacitracin. This is Undecaprenyl-diphosphatase from Geobacillus sp. (strain WCH70).